A 331-amino-acid polypeptide reads, in one-letter code: Putative ankyrin repeat protein RBE_0261 (331 aa).

One copy of the ANK repeat lies at 94–159; that stretch reads QGENVIHKCV…KAKNTLLNIV (66 aa).

This chain is Putative ankyrin repeat protein RBE_0261, found in Rickettsia bellii (strain RML369-C).